The primary structure comprises 171 residues: Endoribonuclease YbeY (171 aa).

Positions 130, 134, and 140 each coordinate Zn(2+).

Belongs to the endoribonuclease YbeY family. It depends on Zn(2+) as a cofactor.

It localises to the cytoplasm. Single strand-specific metallo-endoribonuclease involved in late-stage 70S ribosome quality control and in maturation of the 3' terminus of the 16S rRNA. This is Endoribonuclease YbeY from Neisseria meningitidis serogroup C / serotype 2a (strain ATCC 700532 / DSM 15464 / FAM18).